Here is a 255-residue protein sequence, read N- to C-terminus: Imidazole glycerol phosphate synthase subunit HisF (255 aa).

Active-site residues include Asp-12 and Asp-131.

Belongs to the HisA/HisF family. Heterodimer of HisH and HisF.

It localises to the cytoplasm. The enzyme catalyses 5-[(5-phospho-1-deoxy-D-ribulos-1-ylimino)methylamino]-1-(5-phospho-beta-D-ribosyl)imidazole-4-carboxamide + L-glutamine = D-erythro-1-(imidazol-4-yl)glycerol 3-phosphate + 5-amino-1-(5-phospho-beta-D-ribosyl)imidazole-4-carboxamide + L-glutamate + H(+). Its pathway is amino-acid biosynthesis; L-histidine biosynthesis; L-histidine from 5-phospho-alpha-D-ribose 1-diphosphate: step 5/9. In terms of biological role, IGPS catalyzes the conversion of PRFAR and glutamine to IGP, AICAR and glutamate. The HisF subunit catalyzes the cyclization activity that produces IGP and AICAR from PRFAR using the ammonia provided by the HisH subunit. In Sphingopyxis alaskensis (strain DSM 13593 / LMG 18877 / RB2256) (Sphingomonas alaskensis), this protein is Imidazole glycerol phosphate synthase subunit HisF.